We begin with the raw amino-acid sequence, 556 residues long: 2-isopropylmalate synthase (556 aa).

A Pyruvate carboxyltransferase domain is found at 33 to 307 (PIWCSSDLRD…HPQLDFSDID (275 aa)). Residues Asp42, His246, His248, and Asn282 each contribute to the Mg(2+) site. The tract at residues 439 to 556 (ATSPYALASH…AVTQAEAKAA (118 aa)) is regulatory domain.

Belongs to the alpha-IPM synthase/homocitrate synthase family. LeuA type 2 subfamily. In terms of assembly, homodimer. Mg(2+) is required as a cofactor.

It localises to the cytoplasm. The enzyme catalyses 3-methyl-2-oxobutanoate + acetyl-CoA + H2O = (2S)-2-isopropylmalate + CoA + H(+). The protein operates within amino-acid biosynthesis; L-leucine biosynthesis; L-leucine from 3-methyl-2-oxobutanoate: step 1/4. Functionally, catalyzes the condensation of the acetyl group of acetyl-CoA with 3-methyl-2-oxobutanoate (2-ketoisovalerate) to form 3-carboxy-3-hydroxy-4-methylpentanoate (2-isopropylmalate). This is 2-isopropylmalate synthase from Pseudomonas paraeruginosa (strain DSM 24068 / PA7) (Pseudomonas aeruginosa (strain PA7)).